Consider the following 588-residue polypeptide: Tetratricopeptide repeat protein 39B (588 aa).

TPR repeat units follow at residues 294-327, 485-518, and 526-559; these read SIILFYAARIDILKGRFEQAQETFQKCIVSQQEW, CLVQLLKGVCLKHLGRLLQAELCFNQVIQSEKRV, and PFTFYELGLLYKDQGDRDKAIRYIETAKSNYKDY.

This sequence belongs to the TTC39 family.

Functionally, may be involved in lipid metabolism. The sequence is that of Tetratricopeptide repeat protein 39B (ttc39b) from Xenopus tropicalis (Western clawed frog).